Reading from the N-terminus, the 550-residue chain is Chaperonin GroEL (550 aa).

ATP-binding positions include 30–33, K51, 87–91, G415, 480–482, and D496; these read TLGP, DGTTT, and NAA.

The protein belongs to the chaperonin (HSP60) family. Forms a cylinder of 14 subunits composed of two heptameric rings stacked back-to-back. Interacts with the co-chaperonin GroES.

The protein localises to the cytoplasm. The catalysed reaction is ATP + H2O + a folded polypeptide = ADP + phosphate + an unfolded polypeptide.. Together with its co-chaperonin GroES, plays an essential role in assisting protein folding. The GroEL-GroES system forms a nano-cage that allows encapsulation of the non-native substrate proteins and provides a physical environment optimized to promote and accelerate protein folding. This is Chaperonin GroEL from Variovorax paradoxus (strain S110).